The chain runs to 226 residues: MPRPRKRQTGTAGPDRKKLSGKRTKTENSESTSVKLENSSLEMTTTFKNGGKNLSNYWLMKSEPESRLEKGIDMKFSIEDLKAQPKQTACWDGVRNYQARNFLRAMKLEDEAFFYHSNCKQPGIVGLMKIVKEAYPDHTQFEKSNPHYDPSSKEDDPKWSMVDVQFVRMMKRFIPLEELKTYHQAHKATGGPLKSMTLFTRQRLSVQPLTQEEFDFILSLEETEPS.

The segment at 1–38 (MPRPRKRQTGTAGPDRKKLSGKRTKTENSESTSVKLEN) is disordered. Residues 5–10 (RKRQTG) carry the Nuclear localization signal motif. Residues 14-28 (PDRKKLSGKRTKTEN) show a composition bias toward basic and acidic residues. Residues 29–38 (SESTSVKLEN) are compositionally biased toward polar residues.

Post-translationally, phosphorylated. In terms of tissue distribution, expressed in the medulla containing mature thymocytes, but not the cortex having immature thymocytes (at protein level). Abundant expression seen in testis, liver, brain and kidney with lower levels of the expression in thymus, spleen, heart and stomach.

The protein localises to the nucleus. Specifically binds 5-hydroxymethylcytosine (5hmC), suggesting that it acts as a specific reader of 5hmC. This chain is Thymocyte nuclear protein 1 (Thyn1), found in Mus musculus (Mouse).